The following is a 244-amino-acid chain: UPF0173 metal-dependent hydrolase RoseRS_3945 (244 aa).

The protein belongs to the UPF0173 family.

This chain is UPF0173 metal-dependent hydrolase RoseRS_3945, found in Roseiflexus sp. (strain RS-1).